The sequence spans 1877 residues: Protein TIC 214 (1877 aa).

Helical transmembrane passes span 18–38, 64–84, 87–107, 124–144, 172–192, and 221–241; these read IINS…FSVG, FITG…HLAL, PHTI…WKNH, LSIQ…HFIL, VGWL…LFWI, and IFRI…PSPI. Disordered regions lie at residues 246 to 313, 644 to 695, and 774 to 795; these read LKET…GKEK, DDFE…NSDR, and PEFK…QKKE. 3 stretches are compositionally biased toward acidic residues: residues 251–268, 281–304, and 645–659; these read ETEE…EIET, GSTE…DETE, and DFEE…ESTE. Residues 685 to 695 are compositionally biased toward basic and acidic residues; sequence TSTKDTTNSDR.

Belongs to the TIC214 family. Part of the Tic complex.

The protein localises to the plastid. The protein resides in the chloroplast inner membrane. Its function is as follows. Involved in protein precursor import into chloroplasts. May be part of an intermediate translocation complex acting as a protein-conducting channel at the inner envelope. The polypeptide is Protein TIC 214 (Chloranthus spicatus (Chulantree)).